Consider the following 317-residue polypeptide: Transaldolase (317 aa).

K126 acts as the Schiff-base intermediate with substrate in catalysis.

The protein belongs to the transaldolase family. Type 1 subfamily. As to quaternary structure, homodimer.

It localises to the cytoplasm. It catalyses the reaction D-sedoheptulose 7-phosphate + D-glyceraldehyde 3-phosphate = D-erythrose 4-phosphate + beta-D-fructose 6-phosphate. It participates in carbohydrate degradation; pentose phosphate pathway; D-glyceraldehyde 3-phosphate and beta-D-fructose 6-phosphate from D-ribose 5-phosphate and D-xylulose 5-phosphate (non-oxidative stage): step 2/3. Transaldolase is important for the balance of metabolites in the pentose-phosphate pathway. This Paraburkholderia phytofirmans (strain DSM 17436 / LMG 22146 / PsJN) (Burkholderia phytofirmans) protein is Transaldolase.